Here is a 211-residue protein sequence, read N- to C-terminus: Uridine kinase (211 aa).

Residue 12–19 (GGSGSGKT) participates in ATP binding.

It belongs to the uridine kinase family.

It localises to the cytoplasm. It catalyses the reaction uridine + ATP = UMP + ADP + H(+). It carries out the reaction cytidine + ATP = CMP + ADP + H(+). It functions in the pathway pyrimidine metabolism; CTP biosynthesis via salvage pathway; CTP from cytidine: step 1/3. The protein operates within pyrimidine metabolism; UMP biosynthesis via salvage pathway; UMP from uridine: step 1/1. In Geobacillus kaustophilus (strain HTA426), this protein is Uridine kinase.